A 297-amino-acid polypeptide reads, in one-letter code: Bax inhibitor 1 (297 aa).

Over 1 to 53 (MSGPPPPYEEQSSHLYGQPASSQDGNAFIPEDFKYSTVVISCEPIIRQRFMHK) the chain is Lumenal. The helical transmembrane segment at 54-74 (VYSLLSCQLLASLSFCYWASV) threads the bilayer. Topologically, residues 75 to 85 (STSLQNFIMSH) are cytoplasmic. Residues 86–106 (IALFYICMVVSLVSCIWLAVS) form a helical membrane-spanning segment. At 107 to 146 (PRPEDYEASVPEPLLTGSSEEPAQEQRRLPWYVLSSYKQK) the chain is on the lumenal side. A helical membrane pass occupies residues 147 to 167 (LTLLSIFTLSEAYCLSLVTLA). Residues 168 to 171 (YDKD) lie on the Cytoplasmic side of the membrane. Residues 172 to 192 (TVLSALLITTIVVVGVSLTAL) traverse the membrane as a helical segment. Over 193–208 (SERFENVLNSATSIYY) the chain is Lumenal. The chain crosses the membrane as a helical span at residues 209 to 229 (WLNWGLWIMIGMGLTALLFGW). The Cytoplasmic segment spans residues 230–239 (NTHSSKFNLL). The helical transmembrane segment at 240-260 (YGWLGAILFTAYLFIDTQLIF) threads the bilayer. At 261-270 (RKVYPDEEVR) the chain is on the lumenal side. The chain crosses the membrane as a helical span at residues 271–291 (CAMMLYLDIVNLFLSILRILA). Over 292–297 (NSNDDN) the chain is Cytoplasmic.

Belongs to the BI1 family. LFG subfamily.

It localises to the endoplasmic reticulum membrane. Its subcellular location is the vacuole membrane. It is found in the mitochondrion membrane. In terms of biological role, links the unfolded protein response and programmed cell death and mediates mitochondrial-dependent apoptosis. Induces cell death and disruption of the mitochondrial transmembrane potential via the mitochondrial phosphate carrier MIR1. Dispensible for starvation-induced autophagy. The chain is Bax inhibitor 1 (BXI1) from Saccharomyces cerevisiae (strain ATCC 204508 / S288c) (Baker's yeast).